The primary structure comprises 76 residues: Large ribosomal subunit protein bL31 (76 aa).

The protein belongs to the bacterial ribosomal protein bL31 family. Type A subfamily. Part of the 50S ribosomal subunit.

In terms of biological role, binds the 23S rRNA. This is Large ribosomal subunit protein bL31 from Picosynechococcus sp. (strain ATCC 27264 / PCC 7002 / PR-6) (Agmenellum quadruplicatum).